A 245-amino-acid chain; its full sequence is 5-oxoprolinase subunit A (245 aa).

It belongs to the LamB/PxpA family. In terms of assembly, forms a complex composed of PxpA, PxpB and PxpC.

The catalysed reaction is 5-oxo-L-proline + ATP + 2 H2O = L-glutamate + ADP + phosphate + H(+). Functionally, catalyzes the cleavage of 5-oxoproline to form L-glutamate coupled to the hydrolysis of ATP to ADP and inorganic phosphate. In Haemophilus influenzae (strain 86-028NP), this protein is 5-oxoprolinase subunit A.